A 401-amino-acid chain; its full sequence is Dual-specificity RNA methyltransferase RlmN (401 aa).

The active-site Proton acceptor is Glu114. The region spanning 120–365 (DKTRGTLCVS…TMVRRTRGDD (246 aa)) is the Radical SAM core domain. A disulfide bond links Cys127 and Cys370. [4Fe-4S] cluster is bound by residues Cys134, Cys138, and Cys141. Residues 187–188 (GE), Ser219, 241–243 (SLH), and Asn327 contribute to the S-adenosyl-L-methionine site. The S-methylcysteine intermediate role is filled by Cys370.

Belongs to the radical SAM superfamily. RlmN family. [4Fe-4S] cluster serves as cofactor.

It localises to the cytoplasm. The catalysed reaction is adenosine(2503) in 23S rRNA + 2 reduced [2Fe-2S]-[ferredoxin] + 2 S-adenosyl-L-methionine = 2-methyladenosine(2503) in 23S rRNA + 5'-deoxyadenosine + L-methionine + 2 oxidized [2Fe-2S]-[ferredoxin] + S-adenosyl-L-homocysteine. It catalyses the reaction adenosine(37) in tRNA + 2 reduced [2Fe-2S]-[ferredoxin] + 2 S-adenosyl-L-methionine = 2-methyladenosine(37) in tRNA + 5'-deoxyadenosine + L-methionine + 2 oxidized [2Fe-2S]-[ferredoxin] + S-adenosyl-L-homocysteine. Functionally, specifically methylates position 2 of adenine 2503 in 23S rRNA and position 2 of adenine 37 in tRNAs. m2A2503 modification seems to play a crucial role in the proofreading step occurring at the peptidyl transferase center and thus would serve to optimize ribosomal fidelity. The chain is Dual-specificity RNA methyltransferase RlmN from Stenotrophomonas maltophilia (strain R551-3).